The sequence spans 196 residues: Holliday junction branch migration complex subunit RuvA (196 aa).

Positions 1–61 are domain I; it reads MYEYFEGIVT…DTGITLYGFQ (61 aa). Residues 62 to 140 are domain II; that stretch reads SEDDKGLFLK…DYVARLDRQD (79 aa). The segment at 141–149 is flexible linker; sequence EEQGNISPA. The interval 149 to 196 is domain III; sequence ALNDALLALIALGYTQKEVDRITTKLEEVNADTADQYIKKGLALLLKK.

Belongs to the RuvA family. As to quaternary structure, homotetramer. Forms an RuvA(8)-RuvB(12)-Holliday junction (HJ) complex. HJ DNA is sandwiched between 2 RuvA tetramers; dsDNA enters through RuvA and exits via RuvB. An RuvB hexamer assembles on each DNA strand where it exits the tetramer. Each RuvB hexamer is contacted by two RuvA subunits (via domain III) on 2 adjacent RuvB subunits; this complex drives branch migration. In the full resolvosome a probable DNA-RuvA(4)-RuvB(12)-RuvC(2) complex forms which resolves the HJ.

The protein resides in the cytoplasm. The RuvA-RuvB-RuvC complex processes Holliday junction (HJ) DNA during genetic recombination and DNA repair, while the RuvA-RuvB complex plays an important role in the rescue of blocked DNA replication forks via replication fork reversal (RFR). RuvA specifically binds to HJ cruciform DNA, conferring on it an open structure. The RuvB hexamer acts as an ATP-dependent pump, pulling dsDNA into and through the RuvAB complex. HJ branch migration allows RuvC to scan DNA until it finds its consensus sequence, where it cleaves and resolves the cruciform DNA. This is Holliday junction branch migration complex subunit RuvA from Lactobacillus helveticus (strain DPC 4571).